Here is a 728-residue protein sequence, read N- to C-terminus: 1,4-alpha-glucan branching enzyme GlgB (728 aa).

Catalysis depends on Asp405, which acts as the Nucleophile. The active-site Proton donor is the Glu458.

This sequence belongs to the glycosyl hydrolase 13 family. GlgB subfamily. As to quaternary structure, monomer.

It catalyses the reaction Transfers a segment of a (1-&gt;4)-alpha-D-glucan chain to a primary hydroxy group in a similar glucan chain.. The protein operates within glycan biosynthesis; glycogen biosynthesis. Catalyzes the formation of the alpha-1,6-glucosidic linkages in glycogen by scission of a 1,4-alpha-linked oligosaccharide from growing alpha-1,4-glucan chains and the subsequent attachment of the oligosaccharide to the alpha-1,6 position. The sequence is that of 1,4-alpha-glucan branching enzyme GlgB from Salmonella paratyphi B (strain ATCC BAA-1250 / SPB7).